The sequence spans 77 residues: MARVCKVTGKRPMTGNNVSHANNKTKRRFLPNLQYRKFWVESENRWVRLRVSNAALRTIDKVGIDVVLADLRARGEI.

The tract at residues 1 to 21 (MARVCKVTGKRPMTGNNVSHA) is disordered.

It belongs to the bacterial ribosomal protein bL28 family.

The chain is Large ribosomal subunit protein bL28 from Chromobacterium violaceum (strain ATCC 12472 / DSM 30191 / JCM 1249 / CCUG 213 / NBRC 12614 / NCIMB 9131 / NCTC 9757 / MK).